A 245-amino-acid chain; its full sequence is DNA repair protein RecO (245 aa).

Belongs to the RecO family.

Involved in DNA repair and RecF pathway recombination. This chain is DNA repair protein RecO, found in Porphyromonas gingivalis (strain ATCC BAA-308 / W83).